The sequence spans 1418 residues: MIFVGETMERANHSLVRLRREGEELTLDEKAEICSELELQQKYVDIASNIIGDLSSLPMVGKIVGTIAAAAMTVTHVASGRLDIEQTLLGCSDLPFDQIKEVLEKRFNEVDRKLESHSAALEEITKLVEKSISAVEKTRKQMNKRFDEVMKSIQDAKVSPIVSKINNFARYFDTEKERIRGLKLNDYILKLEEPNGILLHFKESRTPKDDSLQAPLFSIIQEGYAVPKSIDDESAFKVLYALLYGTQTYISVMFFLLEQYSFLANHYYEKGDLEKYDEYFNSLNNVFLDFKSSLVGTGTSNNEGLIDKVLQVLMTFKNSEFLGLGKNGVDEMLNEKINLFNKIKEEIESKQRMTMSETPENFAQISFDKDITTPIGDWRDGREVRYAVQYASETLFSKIGHWSDPVSVREKACPTLRMPVDQTRRNVLVFRKFDNSKPQLVGEITPYLSNFIDIDRDLYNAASNPDSAVGFKEFTKLNYDGANIRATFDQGRTIFHAVAKSGNDKILFGLTFLVKSTELNQPDKKGYTPIHVAADSGNAGIVNLLIQRGVSINSKTYHFLQTPLHLAAQRGFVNTFQRLMESSEININERDKDGFTPLHYAVRGGERILEAFMNQIGIDVNAKSNKGLTPFHLAIIKNDWQVASTLLRNKKVDINAVDENNMTALHYAAILGYLETTKQLINLKEINANVVSSPGLLSALHYAILYKHDDVASFLLRSSNVNVNLKALGGITPLHLAVMQGRKQVLSLMFNIGVNIEQQTDEKYTPLHLAAMSKYPELIQILLDQDSNFEAKTNSGATPLHLATFKGKSQAALILLNNEVNWRDTDENGQMPIHGAATTGLLDVAQAIISIDATVLDIEDKNSDTPLNLAAQNSHIDAVKYFIDQGADINTRNKNGHAPLLAFSKKGNLDMVKYLFDKNANVYIADNNGMNFFYYAVRNGHLNIIKYAMSEKDKFEWSNIDNNRRDECPKEECAISHFAVCDAVQFDKIEIVKFFIGTLGNFNICGPLHQAARYGHLHIVKYLVEEEVLSVDGSKTDTPLCYASENGHLAVVQYLVSNGAKVNHDCANGMTAIDKAITKNHLQVVQFLAANGVDFRRKNSRGATPFLTAVAENAFDIAEYLIREKRQDININEQNVDKETALHLAVYYKNLQMIKLLVKYGIDVTIRNAYDKTVLDIATDAKFSNIVKYLKKNSGKFRREYKSSYGEHSFLQTNEISRFIDGKSIEHDHPQFINADNESSQLFSGTASKIDVIGTLLLIDVLIRYFSKQGYISKESDSASDGITQAAALSITEKFEDVLNSLPNKSAKEQVDLADVHGKVYAALKSGRNSQIHQILCSSLKSISTLKPEDMEKLVSVIMNSHSSLSMPEATDSANEAYGETLHLFGESCRHSEDYISQKFSTNPFSFESEKKIQKISI.

The N-terminal stretch at 1–20 (MIFVGETMERANHSLVRLRR) is a signal peptide. Residues 17 to 20 (RLRR) form a furin-like endopeptidase recognition region region. The interval 238–257 (VLYALLYGTQTYISVMFFLL) is helix H8 is the probable transmembrane region of the tetrameric pore inserted in the target cell membrane. Cysteine 413 and cysteine 1066 are oxidised to a cystine. ANK repeat units follow at residues 458–489 (LYNA…ATFD), 490–521 (QGRT…ELNQ), 525–554 (KGYT…SINS), 559–589 (FLQT…NINE), 593–622 (DGFT…DVNA), 626–656 (KGLT…DINA), 660–690 (NNMT…NANV), 695–723 (GLLS…NVNV), 729–758 (GGIT…NIEQ), 762–791 (EKYT…NFEA), 795–824 (SGAT…NWRD), 828–857 (NGQM…TVLD), 862–891 (NSDT…DINT), 895–924 (NGHA…NVYI), 928–957 (NGMN…KFEW), 971–1003 (EECA…GNFN), 1004–1033 (ICGP…SVDG), 1035–1064 (KTDT…KVNH), 1068–1097 (NGMT…DFRR), 1101–1131 (RGAT…DINI), 1137–1166 (DKET…DVTI), and 1170–1199 (YDKT…KFRR). The 4C4.1 epitope stretch occupies residues 1026 to 1032 (EEVLSVD). Residues 1196 to 1199 (KFRR) are furin-like endopeptidase recognition region. A propeptide spanning residues 1200–1418 (EYKSSYGEHS…SEKKIQKISI (219 aa)) is cleaved from the precursor.

The protein belongs to the cationic peptide 01 (latrotoxin) family. 03 (alpha-latrotoxin) subfamily. Homotetramer in membranes. Processed by furin-like proteases at both the N- and C-termini. Expressed in venom gland, cephalothorax, and abdomen tissues from both males and females.

The protein resides in the secreted. It is found in the target cell membrane. Presynaptic neurotoxin that causes massive release of neurotransmitters from vertebrate (but not invertebrate) nerve terminals and endocrine cells via a complex mechanism involving activation of receptor(s) and toxin insertion into the plasma membrane with subsequent pore formation. Binds to neurexin-1-alpha (NRXN1) in a calcium dependent manner, adhesion G protein-coupled receptor L1 (ADGRL1, also termed latrophilin-1 and calcium-independent receptor of latrotoxin (CIRL)), and receptor-type tyrosine-protein phosphatase S (PTPRS), also termed PTP sigma. NRXN1 and PTPRS are suggested to provide a platform for binding and subsequent pore formation events. In contrast, binding to ADGRL1 does not involve oligomerization and channel formation, but direct downstream stimulation of the synaptic fusion machinery. The chain is Alpha-latrotoxin-Lhe1a from Latrodectus hesperus (Western black widow spider).